The chain runs to 139 residues: HTH-type transcriptional repressor Mb2911 (139 aa).

Positions 6-138 constitute an HTH marR-type domain; it reads DAPLGYLLYR…FKRMLEKLGS (133 aa).

Homodimer.

Its function is as follows. Represses expression of the HQNO methyltransferase htm gene by binding to its promoter region. The protein is HTH-type transcriptional repressor Mb2911 of Mycobacterium bovis (strain ATCC BAA-935 / AF2122/97).